Here is a 797-residue protein sequence, read N- to C-terminus: MENQGTRTQQIRQVLLLFVLLGMSQAGSETWSFSVAEEMQSGSFVGNLAKDLGLKVRELSSRGARVVSNDKKQRLQLDINTGDLLLSETLDREELCGSIEPCVLHLQVLMQNPTQFLQIELQVRDINDHSPIFSEKQMLLEIPENSPVGAVFLLESAKDLDVGINAVKSYTISPNSHFHIKMRVIPDNRKYPELVLDKALDYEELPELSFILSALDGGSPPRSGTALVRVVVVDINDNSPEFEQAFYEVKIRENSILGSLILIVSAWDLDSGTNGEICYTFSHASEDIRKTFEINQKSGEITLRAPLDFETIESYSIIIQATDGGGLFGKSTVIIHVIDVNDNAPEITVSSITSPIPENTPETVVMVFSIQDIDSGDNGRIVCSIPEDLPFVLKSSVENYYTLETERPLDRESTAEYNITITVTDLGIPRLKTEHNTTVLVSDVNDNAPTFTQTSYTLFVRENNSPALHIGSVSATDRDSGTNAQVNYSLLPPQDLHLPLASLVSINTDNGHLFALRSLDYEALQAFDFRVGATDRGSPALSSEALVRVLVLDANDNSPFVLYPLQNGSAPCTELVPRAAEPGYLVTKVVAVDGDSGQNAWLSYQLLKATEPGLFGVWAHNGEVRTARLLSERDAAKHRLVVLVKDNGEPPRSATATLQVLLVDGFSQPYLPLPEAAPAQAQADSLTVYLVVALASVSSLFLFSVLLFVAVRLCRRSRAASVGSCSVPKGPFPGHLVDVSGTGTLSQSYQYEVCLTGGSETNEFKFLKPVIPNIQAKGLGKNSEENSTFRNSFGFNF.

An N-terminal signal peptide occupies residues 1-26 (MENQGTRTQQIRQVLLLFVLLGMSQA). Residues 27-690 (GSETWSFSVA…AQADSLTVYL (664 aa)) are Extracellular-facing. Cadherin domains lie at 35 to 133 (VAEE…SPIF), 138 to 242 (MLLE…SPEF), 247 to 347 (YEVK…APEI), 352 to 451 (ITSP…APTF), and 456 to 561 (YTLF…SPFV). Residues Asn-418, Asn-436, Asn-487, and Asn-567 are each glycosylated (N-linked (GlcNAc...) asparagine). Residues 568–671 (GSAPCTELVP…LVDGFSQPYL (104 aa)) enclose the Cadherin 6 domain. A helical membrane pass occupies residues 691–711 (VVALASVSSLFLFSVLLFVAV). Residues 712-797 (RLCRRSRAAS…TFRNSFGFNF (86 aa)) are Cytoplasmic-facing.

The protein localises to the cell membrane. Functionally, potential calcium-dependent cell-adhesion protein. May be involved in the establishment and maintenance of specific neuronal connections in the brain. The protein is Protocadherin beta-11 (PCDHB11) of Homo sapiens (Human).